We begin with the raw amino-acid sequence, 595 residues long: MHPRYSPAPPPHQQQQQQQQQPMGGPHQQQSAGGGPGHGGGASGHMRAPPNSQQLPPQMPRSQNYANGSSSAASVAAAPPTPRSAFPGAPLTASAVALKGAIPQRPPAMTSPAAAAAGAALAAGAPYRGATSWTPQGYAPAAAAAAAAVAQQAYRYTAPLPQPAYAAYTPHTATTQATTTYGQRVPTAASPSNTNSSSSSNTGSQSGTLSTSLSNTTNTNTTMGPNGTAQNQNQQGGEQLSKTNLYIRGLQQGTTDKDLINMCAQYGTIISTKAILDKTTNKCKGYGFVDFEQPAYAEGAVKGLQAKGVQAQMAKQQEQDPTNLYIANLPPHFKETDLEAMLAKYGQVVSTRILRDQQMNSKGVGFARMESREKCEQIIQMFNGNTIPGAKDPLLVKFADGGPKKKNLFKTPDPNARAWRDVSAEGIPVAYDPTMQQNGVSVNVGTPIGVPYSRFGAPQVGGYPVAGSQWIPGYMMTQPITQVDDQYSSSALQYMQMAAAPQLGVTSYKPEAVNQVQPRGISMMVSGDTAVPYGTMMPQLATLQIGNSYISPTYPYYAPPPTIIPTMPMTDSEQASTAASPDEAYTQYPHQAAPK.

Residues 1-12 (MHPRYSPAPPPH) are compositionally biased toward pro residues. The interval 1–82 (MHPRYSPAPP…ASVAAAPPTP (82 aa)) is disordered. Position 5 is a phosphotyrosine (tyrosine 5). Residues 13–31 (QQQQQQQQQPMGGPHQQQS) show a composition bias toward low complexity. Positions 32 to 43 (AGGGPGHGGGAS) are enriched in gly residues. The span at 50–68 (PNSQQLPPQMPRSQNYANG) shows a compositional bias: polar residues. Residues 69-78 (SSSAASVAAA) show a composition bias toward low complexity. Phosphotyrosine occurs at positions 138 and 154. A disordered region spans residues 184 to 238 (RVPTAASPSNTNSSSSSNTGSQSGTLSTSLSNTTNTNTTMGPNGTAQNQNQQGGE). Low complexity predominate over residues 190-238 (SPSNTNSSSSSNTGSQSGTLSTSLSNTTNTNTTMGPNGTAQNQNQQGGE). RRM domains follow at residues 243 to 316 (TNLY…MAKQ) and 322 to 401 (TNLY…FADG). Residues 569–595 (MTDSEQASTAASPDEAYTQYPHQAAPK) form a disordered region.

Has a role in the perception of gravity. In Drosophila virilis (Fruit fly), this protein is Protein alan shepard.